The sequence spans 1940 residues: Myosin-3 (1940 aa).

The Myosin N-terminal SH3-like domain occupies 33 to 82 (DAKTYCFVVDSKEEYAKGKIKSSQDGKVTVETEDNRTLVVKPEDVYAMNP). The 694-residue stretch at 86-779 (DKIEDMAMLT…LLGTLEEMRD (694 aa)) folds into the Myosin motor domain. The residue at position 130 (lysine 130) is an N6,N6,N6-trimethyllysine. 179-186 (GESGAGKT) contributes to the ATP binding site. Actin-binding stretches follow at residues 656–678 (LNKL…IPNE) and 758–772 (KFGH…GLLG). Positions 782-811 (LAKLITRTQAVCRGFLMRVEFQKMMQRRES) constitute an IQ domain. A coiled-coil region spans residues 840–1933 (LLKSAETEKE…KTRDFTSSRM (1094 aa)). Positions 1260-1289 (ARGKNEETQRSLSELTTQKSRLQTEAGELS) are disordered. The segment covering 1269-1282 (RSLSELTTQKSRLQ) has biased composition (polar residues).

It belongs to the TRAFAC class myosin-kinesin ATPase superfamily. Myosin family. As to quaternary structure, muscle myosin is a hexameric protein that consists of 2 heavy chain subunits (MHC), 2 alkali light chain subunits (MLC) and 2 regulatory light chain subunits (MLC-2).

The protein resides in the cytoplasm. It localises to the myofibril. Its function is as follows. Muscle contraction. The polypeptide is Myosin-3 (Myh3) (Rattus norvegicus (Rat)).